The chain runs to 121 residues: Small ribosomal subunit protein uS13 (121 aa).

The tract at residues 95 to 121 (GLPVRGQKTKTNARTRKGKRKTVGAKS) is disordered.

Belongs to the universal ribosomal protein uS13 family. As to quaternary structure, part of the 30S ribosomal subunit. Forms a loose heterodimer with protein S19. Forms two bridges to the 50S subunit in the 70S ribosome.

Its function is as follows. Located at the top of the head of the 30S subunit, it contacts several helices of the 16S rRNA. In the 70S ribosome it contacts the 23S rRNA (bridge B1a) and protein L5 of the 50S subunit (bridge B1b), connecting the 2 subunits; these bridges are implicated in subunit movement. Contacts the tRNAs in the A and P-sites. This is Small ribosomal subunit protein uS13 from Campylobacter jejuni subsp. jejuni serotype O:23/36 (strain 81-176).